The sequence spans 272 residues: Sulfate transporter CysZ (272 aa).

Helical transmembrane passes span 29 to 49 (FVIM…WLFI), 66 to 86 (WLSF…LLLF), 148 to 168 (IIAL…VPVL), and 219 to 239 (FVPV…TLMW).

The protein belongs to the CysZ family.

The protein resides in the cell inner membrane. Its function is as follows. High affinity, high specificity proton-dependent sulfate transporter, which mediates sulfate uptake. Provides the sulfur source for the cysteine synthesis pathway. This is Sulfate transporter CysZ from Haemophilus influenzae (strain PittGG).